The chain runs to 190 residues: MAPRSYSKTAKVPRRPFEAARLDSELKLVGEYGLRNKREVWRVLLTLSKIRRAARELLTLDEKDPKRLFEGNALIRRLVRVGVLDESRMKLDYVLALKAEDFLERRLQTLVYKLGLAKSIHHARVLIRQRHIRVGKQIVNVPSFVVRLDSQKHIDFALTSPFGGGRPGRVRRKKAKAAEGGDGDAEEDEE.

In terms of domain architecture, S4 RNA-binding spans 105–181 (RRLQTLVYKL…RKKAKAAEGG (77 aa)). The disordered stretch occupies residues 163-190 (GGGRPGRVRRKKAKAAEGGDGDAEEDEE). Over residues 181 to 190 (GDGDAEEDEE) the composition is skewed to acidic residues.

This sequence belongs to the universal ribosomal protein uS4 family.

In Podospora anserina (Pleurage anserina), this protein is Small ribosomal subunit protein uS4 (RPS9).